Consider the following 1036-residue polypeptide: Nitrogen catabolic enzyme regulatory protein (1036 aa).

Positions 1-17 (MAASTTTPTATTRPFFT) are enriched in low complexity. Disordered stretches follow at residues 1–126 (MAAS…HTQS), 207–240 (TDRTHRFSESAPQKSTSGIARLRKSSEQTQSQGS), 256–298 (TPAG…QSQH), 318–351 (GYLPRHLRKTSIDETSKRNPNRKRPADFSPHVSA), 590–743 (SSQG…PTTC), 792–976 (RGSG…PTTQ), and 1000–1028 (GMPNGQAGQMMGASSSSGPGSGPSRTGAE). The span at 23 to 34 (TEHDFRFPRRPG) shows a compositional bias: basic and acidic residues. The span at 45-56 (AAMSSSSANNNH) shows a compositional bias: low complexity. 3 repeat units span residues 49–55 (SSSANNN), 87–92 (SSSNNN), and 105–110 (SSSNNN). The 3 X approximate repeats stretch occupies residues 49–110 (SSSANNNHNQ…INHQSSSNNN (62 aa)). Residues 100 to 114 (NINHQSSSNNNISKN) are compositionally biased toward low complexity. Residues 652–661 (PRSQSQSFRQ) are compositionally biased toward polar residues. The span at 703–714 (SSGLSSVPASRP) shows a compositional bias: low complexity. Polar residues predominate over residues 723–736 (QGSTTNLQGAAGNS). The segment at 743–767 (CTNCFTQTTPLWRRNPDGQPLCNAC) adopts a GATA-type zinc-finger fold. Over residues 802-827 (GTSTRSKKNASMSAAARKNSTLSITS) the composition is skewed to polar residues. Low complexity-rich tracts occupy residues 828 to 861 (NANNQPPAQVATPPAQQQVRASSVNESESPASGP) and 868 to 899 (AGSTPTSYHGSTGSTSGAVGGKSVIPIASAPP). Over residues 927-961 (SAGSDQPVSAGAVSSSGMDVDSPANSTGSNETMPT) the composition is skewed to polar residues. Over residues 1000–1023 (GMPNGQAGQMMGASSSSGPGSGPS) the composition is skewed to low complexity.

In terms of assembly, interacts with nmr.

Its subcellular location is the nucleus. Functionally, major nitrogen regulatory protein. During conditions of nitrogen limitation it turns on the expression of genes for enzymes which are required for the use of a variety of secondary nitrogen sources, including nitrates, purines, amino acids, and proteins. The chain is Nitrogen catabolic enzyme regulatory protein (nit-2) from Neurospora crassa (strain ATCC 24698 / 74-OR23-1A / CBS 708.71 / DSM 1257 / FGSC 987).